A 331-amino-acid polypeptide reads, in one-letter code: tRNA N6-adenosine threonylcarbamoyltransferase (331 aa).

Residues H109, H113, and Y130 each coordinate Fe cation. Substrate is bound by residues 130–134 (YLSGG), D162, D183, and S262. Position 290 (D290) interacts with Fe cation.

It belongs to the KAE1 / TsaD family. Fe(2+) serves as cofactor.

It localises to the cytoplasm. It carries out the reaction L-threonylcarbamoyladenylate + adenosine(37) in tRNA = N(6)-L-threonylcarbamoyladenosine(37) in tRNA + AMP + H(+). Required for the formation of a threonylcarbamoyl group on adenosine at position 37 (t(6)A37) in tRNAs that read codons beginning with adenine. Is probably involved in the transfer of the threonylcarbamoyl moiety of threonylcarbamoyl-AMP (TC-AMP) to the N6 group of A37. This Saccharolobus islandicus (strain M.16.27) (Sulfolobus islandicus) protein is tRNA N6-adenosine threonylcarbamoyltransferase.